Here is a 203-residue protein sequence, read N- to C-terminus: Excretory canal abnormal exc-13 (203 aa).

The signal sequence occupies residues 1–20 (MIGFLKFALIGTVLLGVANG). Residues asparagine 32, asparagine 84, and asparagine 188 are each glycosylated (N-linked (GlcNAc...) asparagine).

The protein belongs to the UPF0376 family.

It localises to the secreted. This is Excretory canal abnormal exc-13 from Caenorhabditis elegans.